Reading from the N-terminus, the 440-residue chain is Serine/threonine-protein kinase VRK1 (440 aa).

Positions Trp37–Tyr317 constitute a Protein kinase domain. ATP contacts are provided by residues Ile43 to Ile51 and Lys71. A Glycyl lysine isopeptide (Lys-Gly) (interchain with G-Cter in SUMO2) cross-link involves residue Lys71. Catalysis depends on Asp177, which acts as the Proton acceptor. Ser342 carries the post-translational modification Phosphoserine; by PLK3. Position 376 is a phosphoserine (Ser376). Thr378 is subject to Phosphothreonine. Composition is skewed to polar residues over residues Gln379–Ser391 and Ser398–Asp410. The interval Gln379–Lys440 is disordered. Residues Arg387–Gly393 are required for interaction with the nucleosome.

Belongs to the protein kinase superfamily. CK1 Ser/Thr protein kinase family. VRK subfamily. Interacts with HDAC1, KAT2B, SETDB1, KDM3A and KDM4A. Associates with the nucleosome through interactions with nucleosome DNA, histone H2A and histone H2B; the interaction with H2A and H2B is mediated by the nucleosome acidic patch, a cluster of negatively charged residues of H2A and H2B forming a cleft within the nucleosome core. In terms of processing, autophosphorylated at various serine and threonine residues. Autophosphorylation does not impair its ability to phosphorylate p53/TP53. Phosphorylation by PLK3 leads to induction of Golgi fragmentation during mitosis. In terms of tissue distribution, highly expressed in testis. Expressed in liver, kidney and muscle. Weakly expressed in thymus, bone marrow and spleen.

It localises to the nucleus. It is found in the cytoplasm. Its subcellular location is the cajal body. The catalysed reaction is L-seryl-[protein] + ATP = O-phospho-L-seryl-[protein] + ADP + H(+). The enzyme catalyses L-threonyl-[protein] + ATP = O-phospho-L-threonyl-[protein] + ADP + H(+). Active in presence of Mn(2+), Mg(2+) and Zn(2+), but is not functional with Ca(2+) or Cu(2+). Has a higher affinity for Mn(2+) than for Mg(2+). RAN inhibits its autophosphorylation and its ability to phosphorylate histone H3. Functionally, serine/threonine kinase involved in the regulation of key cellular processes including the cell cycle, nuclear condensation, transcription regulation, and DNA damage response. Controls chromatin organization and remodeling by mediating phosphorylation of histone H3 on 'Thr-4' and histone H2AX (H2aXT4ph). It also phosphorylates KAT5 in response to DNA damage, promoting KAT5 association with chromatin and histone acetyltransferase activity. Is involved in the regulation of cell cycle progression of neural progenitors, and is required for proper cortical neuronal migration. Is involved in neurite elongation and branching in motor neurons, and has an essential role in Cajal bodies assembly, acting through COIL phosphorylation and the control of coilin degradation. Involved in Golgi disassembly during the cell cycle: following phosphorylation by PLK3 during mitosis, required to induce Golgi fragmentation. Phosphorylates BANF1: disrupts its ability to bind DNA, reduces its binding to LEM domain-containing proteins and causes its relocalization from the nucleus to the cytoplasm. Phosphorylates TP53BP1 and p53/TP53 on 'Thr-18', preventing the interaction between p53/TP53 and MDM2. Phosphorylates ATF2 which activates its transcriptional activity. Phosphorylates JUN. The chain is Serine/threonine-protein kinase VRK1 from Mus musculus (Mouse).